Consider the following 214-residue polypeptide: Ribonuclease HII (214 aa).

One can recognise an RNase H type-2 domain in the interval 27–214 (SVVAGIDEAG…SPIKQMCAIV (188 aa)). The a divalent metal cation site is built by Asp33, Glu34, and Asp126.

Belongs to the RNase HII family. Mn(2+) serves as cofactor. The cofactor is Mg(2+).

It localises to the cytoplasm. It carries out the reaction Endonucleolytic cleavage to 5'-phosphomonoester.. Endonuclease that specifically degrades the RNA of RNA-DNA hybrids. In Chlamydia pneumoniae (Chlamydophila pneumoniae), this protein is Ribonuclease HII (rnhB).